Consider the following 492-residue polypeptide: Cyclic di-GMP phosphodiesterase VC_1295 (492 aa).

6 helical membrane-spanning segments follow: residues 14-34, 49-69, 80-100, 111-131, 160-180, and 205-225; these read IYHAPLTFGLYALAGVLFALY, EIATQVGAVFILAWLIRHTLL, FIQLDTALLFAMSLPLALYYN, LKVLFGMTLFGFFTGALLQLS, LIGLIVLLISTLTVMLSMVAI, and EFAFLSLVLGGYITAILVLWS. Positions 226–278 constitute an HAMP domain; sequence RMMKEILDHQERSLQAVTQGNLQVRLPVYSNDELGNVAMLTNQMLDSLEATQN. Residues 280–490 form the HD-GYP domain; the sequence is VKTTRDVAIV…FVAIAAHFKD (211 aa).

Its subcellular location is the cell inner membrane. It carries out the reaction 3',3'-c-di-GMP + 2 H2O = 2 GMP + 2 H(+). In terms of biological role, phosphodiesterase (PDE) that catalyzes the hydrolysis of cyclic diguanylate (c-di-GMP) to GMP in vitro. Increases motility and decreases biofilm formation in vivo. In Vibrio cholerae serotype O1 (strain ATCC 39315 / El Tor Inaba N16961), this protein is Cyclic di-GMP phosphodiesterase VC_1295.